Here is a 535-residue protein sequence, read N- to C-terminus: CTP synthase (535 aa).

The segment at 1 to 266 (MKTKFIFITG…DERVVEKLNI (266 aa)) is amidoligase domain. Ser14 is a binding site for CTP. Ser14 contributes to the UTP binding site. ATP is bound by residues 15-20 (SIGKGL) and Asp72. Residues Asp72 and Glu140 each contribute to the Mg(2+) site. Residues 147–149 (DIE), 187–192 (KTKPTQ), and Lys223 each bind CTP. Residues 187-192 (KTKPTQ) and Lys223 contribute to the UTP site. Residues 292–534 (RIAIVGKYVN…VRAALIQRDA (243 aa)) form the Glutamine amidotransferase type-1 domain. Gly354 provides a ligand contact to L-glutamine. The active-site Nucleophile; for glutamine hydrolysis is the Cys381. Residues 382–385 (LGMQ), Glu405, and Arg462 contribute to the L-glutamine site. Residues His507 and Glu509 contribute to the active site.

It belongs to the CTP synthase family. As to quaternary structure, homotetramer.

It carries out the reaction UTP + L-glutamine + ATP + H2O = CTP + L-glutamate + ADP + phosphate + 2 H(+). The enzyme catalyses L-glutamine + H2O = L-glutamate + NH4(+). The catalysed reaction is UTP + NH4(+) + ATP = CTP + ADP + phosphate + 2 H(+). Its pathway is pyrimidine metabolism; CTP biosynthesis via de novo pathway; CTP from UDP: step 2/2. Its activity is regulated as follows. Allosterically activated by GTP, when glutamine is the substrate; GTP has no effect on the reaction when ammonia is the substrate. The allosteric effector GTP functions by stabilizing the protein conformation that binds the tetrahedral intermediate(s) formed during glutamine hydrolysis. Inhibited by the product CTP, via allosteric rather than competitive inhibition. Its function is as follows. Catalyzes the ATP-dependent amination of UTP to CTP with either L-glutamine or ammonia as the source of nitrogen. Regulates intracellular CTP levels through interactions with the four ribonucleotide triphosphates. The protein is CTP synthase of Pelobacter propionicus (strain DSM 2379 / NBRC 103807 / OttBd1).